A 724-amino-acid chain; its full sequence is Probable serine/threonine-protein kinase KKQ8 (724 aa).

2 disordered regions span residues 1–81 and 93–188; these read MVMQ…RQRS and HPFR…KDIL. A Phosphoserine modification is found at S19. Residues 45 to 54 are compositionally biased toward low complexity; the sequence is PYRSSSTSPK. The span at 95-106 shows a compositional bias: polar residues; that stretch reads FRQTGSGASNSP. The segment covering 143–162 has biased composition (low complexity); it reads RSSSVSSCDSSNGTTSSSDS. Phosphoserine is present on residues S232, S238, and S241. Composition is skewed to polar residues over residues 318-329 and 338-351; these read NASSLLPNVEKS and GQSP…SPTQ. A disordered region spans residues 318–355; the sequence is NASSLLPNVEKSQTNHEKRTGQSPNDSNRSSPTQGRED. The Protein kinase domain occupies 412 to 712; that stretch reads GHPVGLVGAG…VGKLLDMQWM (301 aa). ATP contacts are provided by residues 418-426 and K455; that span reads VGAGAYGEV. The active-site Proton acceptor is the D563.

It belongs to the protein kinase superfamily. CAMK Ser/Thr protein kinase family. NPR/HAL subfamily. HAL5 sub-subfamily.

It localises to the cytoplasm. The enzyme catalyses L-seryl-[protein] + ATP = O-phospho-L-seryl-[protein] + ADP + H(+). It carries out the reaction L-threonyl-[protein] + ATP = O-phospho-L-threonyl-[protein] + ADP + H(+). This Saccharomyces cerevisiae (strain YJM789) (Baker's yeast) protein is Probable serine/threonine-protein kinase KKQ8 (KKQ8).